A 353-amino-acid polypeptide reads, in one-letter code: S-adenosylmethionine:tRNA ribosyltransferase-isomerase (353 aa).

This sequence belongs to the QueA family. In terms of assembly, monomer.

It localises to the cytoplasm. It carries out the reaction 7-aminomethyl-7-carbaguanosine(34) in tRNA + S-adenosyl-L-methionine = epoxyqueuosine(34) in tRNA + adenine + L-methionine + 2 H(+). Its pathway is tRNA modification; tRNA-queuosine biosynthesis. Transfers and isomerizes the ribose moiety from AdoMet to the 7-aminomethyl group of 7-deazaguanine (preQ1-tRNA) to give epoxyqueuosine (oQ-tRNA). This Burkholderia vietnamiensis (strain G4 / LMG 22486) (Burkholderia cepacia (strain R1808)) protein is S-adenosylmethionine:tRNA ribosyltransferase-isomerase.